A 660-amino-acid chain; its full sequence is Probable beta-hexosaminidase fdl (660 aa).

A signal peptide spans 1–36 (MSLAVSLRRALLVLLTGAIFILTVLYWNQGVTKAQA). 3 N-linked (GlcNAc...) asparagine glycosylation sites follow: Asn-210, Asn-412, and Asn-452.

Belongs to the glycosyl hydrolase 20 family. In third instar larval and early pupal brains, expressed in cells sending projections across the interhemispheric junction. In adult brain, expressed in mushroom body, ellipsoid body and pars intercerebralis.

It catalyses the reaction Hydrolysis of terminal non-reducing N-acetyl-D-hexosamine residues in N-acetyl-beta-D-hexosaminides.. In terms of biological role, involved in brain restructurization via hormonal control during metamorphosis. Implicated in N-glycan processing. The sequence is that of Probable beta-hexosaminidase fdl (fdl) from Drosophila melanogaster (Fruit fly).